Here is a 97-residue protein sequence, read N- to C-terminus: Putative CC-type chemokine U83 (97 aa).

2 disulfides stabilise this stretch: Cys32-Cys62 and Cys33-Cys76.

The protein belongs to the intercrine beta (chemokine CC) family. Highly divergent.

In Homo sapiens (Human), this protein is Putative CC-type chemokine U83 (U83).